Here is a 104-residue protein sequence, read N- to C-terminus: Guanidinium exporter (104 aa).

The Cytoplasmic portion of the chain corresponds to 1–3 (MSW). A helical transmembrane segment spans residues 4–26 (IILFVAGLLEIVWAVGLKYTHGF). Topologically, residues 27-32 (TRLTPS) are periplasmic. A helical membrane pass occupies residues 33–50 (IITISAMIVSMGMLSYAM). Residues 51–54 (KGLP) lie on the Cytoplasmic side of the membrane. Residues 55-77 (AGTAYAIWTGIGAVGTAIFGIIV) traverse the membrane as a helical segment. Residues 78 to 83 (FGESAN) lie on the Periplasmic side of the membrane. The chain crosses the membrane as a helical span at residues 84-103 (IYRLLSLAMIVFGIIGLKLA). S104 is a topological domain (cytoplasmic).

It belongs to the drug/metabolite transporter (DMT) superfamily. Small multidrug resistance (SMR) (TC 2.A.7.1) family. Gdx/SugE subfamily.

It is found in the cell inner membrane. Functionally, guanidinium ion exporter. Couples guanidinium export to the proton motive force, exchanging one guanidinium ion for two protons. The sequence is that of Guanidinium exporter from Proteus vulgaris.